Reading from the N-terminus, the 418-residue chain is Gamma-glutamyl phosphate reductase (418 aa).

It belongs to the gamma-glutamyl phosphate reductase family.

The protein resides in the cytoplasm. The catalysed reaction is L-glutamate 5-semialdehyde + phosphate + NADP(+) = L-glutamyl 5-phosphate + NADPH + H(+). Its pathway is amino-acid biosynthesis; L-proline biosynthesis; L-glutamate 5-semialdehyde from L-glutamate: step 2/2. In terms of biological role, catalyzes the NADPH-dependent reduction of L-glutamate 5-phosphate into L-glutamate 5-semialdehyde and phosphate. The product spontaneously undergoes cyclization to form 1-pyrroline-5-carboxylate. The chain is Gamma-glutamyl phosphate reductase from Pelodictyon phaeoclathratiforme (strain DSM 5477 / BU-1).